The primary structure comprises 282 residues: Energy-coupling factor transporter ATP-binding protein EcfA1 (282 aa).

Positions 6-243 (ISFDHVTFTY…VEMLKRIGLD (238 aa)) constitute an ABC transporter domain. 40–47 (GHNGSGKS) is an ATP binding site.

Belongs to the ABC transporter superfamily. Energy-coupling factor EcfA family. In terms of assembly, forms a stable energy-coupling factor (ECF) transporter complex composed of 2 membrane-embedded substrate-binding proteins (S component), 2 ATP-binding proteins (A component) and 2 transmembrane proteins (T component).

Its subcellular location is the cell membrane. In terms of biological role, ATP-binding (A) component of a common energy-coupling factor (ECF) ABC-transporter complex. Unlike classic ABC transporters this ECF transporter provides the energy necessary to transport a number of different substrates. In Lactobacillus delbrueckii subsp. bulgaricus (strain ATCC BAA-365 / Lb-18), this protein is Energy-coupling factor transporter ATP-binding protein EcfA1.